A 102-amino-acid polypeptide reads, in one-letter code: Defensin-like protein 285 (102 aa).

An N-terminal signal peptide occupies residues 1-28 (MTNLYFKTAFLLSLLLLSFSYQSKLIEA). Intrachain disulfides connect C39–C100, C64–C83, C70–C88, and C75–C90.

It belongs to the DEFL family.

It is found in the secreted. The sequence is that of Defensin-like protein 285 from Arabidopsis thaliana (Mouse-ear cress).